The chain runs to 455 residues: Alpha-1,3/1,6-mannosyltransferase ALG2 (455 aa).

Residues 73 to 95 (FGRFYILCAILRQFVLVASLILW) form a helical membrane-spanning segment. The N-linked (GlcNAc...) asparagine glycan is linked to Asn-138. Residues 434-453 (GAVYLLGAIGVLFACIIYCI) form a helical membrane-spanning segment.

The protein belongs to the glycosyltransferase group 1 family. Glycosyltransferase 4 subfamily.

The protein localises to the endoplasmic reticulum membrane. The enzyme catalyses a beta-D-Man-(1-&gt;4)-beta-D-GlcNAc-(1-&gt;4)-alpha-D-GlcNAc-diphospho-di-trans,poly-cis-dolichol + GDP-alpha-D-mannose = an alpha-D-Man-(1-&gt;3)-beta-D-Man-(1-&gt;4)-beta-D-GlcNAc-(1-&gt;4)-alpha-D-GlcNAc-diphospho-di-trans,poly-cis-dolichol + GDP + H(+). It catalyses the reaction an alpha-D-Man-(1-&gt;3)-beta-D-Man-(1-&gt;4)-beta-D-GlcNAc-(1-&gt;4)-alpha-D-GlcNAc-diphospho-di-trans,poly-cis-dolichol + GDP-alpha-D-mannose = an alpha-D-Man-(1-&gt;3)-[alpha-D-Man-(1-&gt;6)]-beta-D-Man-(1-&gt;4)-beta-D-GlcNAc-(1-&gt;4)-alpha-D-GlcNAc-diphospho-di-trans,poly-cis-dolichol + GDP + H(+). Its pathway is protein modification; protein glycosylation. Mannosylates Man(2)GlcNAc(2)-dolichol diphosphate and Man(1)GlcNAc(2)-dolichol diphosphate to form Man(3)GlcNAc(2)-dolichol diphosphate. The protein is Alpha-1,3/1,6-mannosyltransferase ALG2 (ALG2) of Rhizomucor pusillus.